We begin with the raw amino-acid sequence, 172 residues long: 3-hydroxydecanoyl-[acyl-carrier-protein] dehydratase (172 aa).

Residue histidine 71 is part of the active site.

Belongs to the thioester dehydratase family. FabA subfamily. In terms of assembly, homodimer.

It localises to the cytoplasm. It catalyses the reaction a (3R)-hydroxyacyl-[ACP] = a (2E)-enoyl-[ACP] + H2O. The enzyme catalyses (3R)-hydroxydecanoyl-[ACP] = (2E)-decenoyl-[ACP] + H2O. It carries out the reaction (2E)-decenoyl-[ACP] = (3Z)-decenoyl-[ACP]. Its pathway is lipid metabolism; fatty acid biosynthesis. Its function is as follows. Necessary for the introduction of cis unsaturation into fatty acids. Catalyzes the dehydration of (3R)-3-hydroxydecanoyl-ACP to E-(2)-decenoyl-ACP and then its isomerization to Z-(3)-decenoyl-ACP. Can catalyze the dehydratase reaction for beta-hydroxyacyl-ACPs with saturated chain lengths up to 16:0, being most active on intermediate chain length. The chain is 3-hydroxydecanoyl-[acyl-carrier-protein] dehydratase from Erwinia tasmaniensis (strain DSM 17950 / CFBP 7177 / CIP 109463 / NCPPB 4357 / Et1/99).